A 423-amino-acid polypeptide reads, in one-letter code: MTNKNAFLEAKTYIPGGVDSPVRAFGSVGSDPVFIDHGNGEFLYDIEGNEYIDYVLSWGPLIFGHCDSDIEEAVIKTAKKGLSFGAPCLLETALAKLVLSKFPWLGKIRFVSSGTEATMSAIRLARGYSKKNGIIKFEGCYHGHSDSLLVKAGSGATTFGYSSSLGVPEDIVKNTHIAIYNDIQSVEQCFKNEDIGVIIVEPIAGNMGLVPADQVFLDALRKLCDEYGAVLIFDEVMSGFRASATGSYEFNKIQADIITFGKVIGGGMSAAAFAAKNEIMEMISPLGGVYQAGTLSGNPVAMAAGLASLSKIYNSPNLYKDLENKSKFIVEALENSAKKAGIALQTEVRGSMWGYFFNDRPVKNYKDALNSDTKMFAKFHAQMIKRGIYLAPSQFETGFVCDKLSQKSLEKTANAIEESFKAL.

Lys-262 carries the N6-(pyridoxal phosphate)lysine modification.

This sequence belongs to the class-III pyridoxal-phosphate-dependent aminotransferase family. HemL subfamily. Homodimer. Pyridoxal 5'-phosphate is required as a cofactor.

The protein localises to the cytoplasm. It carries out the reaction (S)-4-amino-5-oxopentanoate = 5-aminolevulinate. Its pathway is porphyrin-containing compound metabolism; protoporphyrin-IX biosynthesis; 5-aminolevulinate from L-glutamyl-tRNA(Glu): step 2/2. This chain is Glutamate-1-semialdehyde 2,1-aminomutase, found in Campylobacter fetus subsp. fetus (strain 82-40).